Consider the following 156-residue polypeptide: Transcription antitermination protein NusB (156 aa).

The protein belongs to the NusB family.

Its function is as follows. Involved in transcription antitermination. Required for transcription of ribosomal RNA (rRNA) genes. Binds specifically to the boxA antiterminator sequence of the ribosomal RNA (rrn) operons. The sequence is that of Transcription antitermination protein NusB from Rickettsia conorii (strain ATCC VR-613 / Malish 7).